A 731-amino-acid chain; its full sequence is Inducible ornithine decarboxylase (731 aa).

The residue at position 356 (Lys-356) is an N6-(pyridoxal phosphate)lysine.

This sequence belongs to the Orn/Lys/Arg decarboxylase class-I family. As to quaternary structure, dodecamer. Requires pyridoxal 5'-phosphate as cofactor.

The catalysed reaction is L-ornithine + H(+) = putrescine + CO2. The polypeptide is Inducible ornithine decarboxylase (odcI) (Lactobacillus sp. (strain 30a)).